The following is a 321-amino-acid chain: NADPH-dependent codeinone reductase 1-2 (321 aa).

Residues Thr-27 and Asp-51 each coordinate NADPH. Catalysis depends on proton donor residues Tyr-56 and His-119. His-119 is a binding site for substrate. NADPH contacts are provided by Ser-165, Gln-187, Ser-214, Leu-216, Ser-264, and Arg-269. Residues 299-321 form a disordered region; the sequence is SADFLLSPTGPFKTEEEFWDEKD.

The protein belongs to the aldo/keto reductase family. As to expression, latex secreting cells (laticifer cells). Expressed constitutively in all organs with highest levels in capsules. Restricted to the parietal region of sieve elements adjacent or proximal to laticifers in roots, stems, leaves and carpels.

The protein resides in the cytoplasm. The protein localises to the cytosol. The catalysed reaction is codeine + NADP(+) = codeinone + NADPH + H(+). It carries out the reaction neopine + NADP(+) = neopinone + NADPH + H(+). It catalyses the reaction morphine + NADP(+) = morphinone + NADPH + H(+). The enzyme catalyses neomorphine + NADP(+) = neomorphinone + NADPH + H(+). Its pathway is alkaloid biosynthesis; morphine biosynthesis. In terms of biological role, NADPH-dependent codeinone reductase involved in biosynthesis of morphinan-type benzylisoquinoline and opiate alkaloids natural products. Reduces codeinone to codeine in the penultimate step in morphine biosynthesis. Can use morphinone, hydrocodone and hydromorphone as substrate during reductive reaction with NADPH as cofactor, and morphine and dihydrocodeine as substrate during oxidative reaction with NADP as cofactor. Converts morphinone to morphine, and neomorphinone to neomorphine. Reduces irreversibly neopinone, a spontaneous isomer of codeinone, to neopine; in planta, neopine levels are limited to low levels. This is NADPH-dependent codeinone reductase 1-2 from Papaver somniferum (Opium poppy).